A 262-amino-acid chain; its full sequence is Nurim (262 aa).

Topologically, residues Met-1–Ala-4 are nuclear. A helical membrane pass occupies residues Leu-5–Phe-28. Topologically, residues Thr-29 to Ser-58 are perinuclear space. A helical transmembrane segment spans residues Ile-59–Met-80. Residues Ala-81–Gln-97 lie on the Nuclear side of the membrane. The helical transmembrane segment at Arg-98–Arg-114 threads the bilayer. Residues Tyr-115–Trp-133 are Perinuclear space-facing. A helical transmembrane segment spans residues Ala-134–Leu-164. The Nuclear segment spans residues Met-165 to Leu-191. Residues Phe-192–Val-210 traverse the membrane as a helical segment. The Perinuclear space portion of the chain corresponds to Pro-211–Asp-216. The chain crosses the membrane as a helical span at residues Arg-217 to Leu-234. Over Asp-235–Glu-262 the chain is Nuclear.

This sequence belongs to the nurim family.

Its subcellular location is the nucleus inner membrane. The protein is Nurim (Nrm) of Rattus norvegicus (Rat).